The sequence spans 153 residues: UPF0756 membrane protein LSL_0936 (153 aa).

The next 5 helical transmembrane spans lie at Trp-4–Ile-24, Gly-26–Ile-46, Ile-51–Ile-71, Trp-86–Leu-106, and Leu-116–Ile-136.

The protein belongs to the UPF0756 family.

Its subcellular location is the cell membrane. This chain is UPF0756 membrane protein LSL_0936, found in Ligilactobacillus salivarius (strain UCC118) (Lactobacillus salivarius).